We begin with the raw amino-acid sequence, 424 residues long: MTTILDELRWRGLLYESSDGLDDLLERERVTLYIGFDPSADSLHIGHLLPLLTLARFQRWGHTPIALAGGGTGLIGDPSGKTQERPLLSKEQVAANVEAIKRQLAQFLDFNAGDHSAMLLNNAEWLTRLSLMDFLRDVGKHLTVNYMLAKDSVRSRMMSETGISFTEFSYMLLQAYDFAYLFEHYGCKLQAGGSDQWGNITAGIELIRRTSGQKAYGLVYPLVTKADGTKFGKTESGAVWLDPKRTSPYRFYQFWYNVDDADVGKYLRYFTWLSAAEIEELEQITARQPERRTAQQRLAREVTRMVHGEAALARAEEASQALFGGSLASLSADDVADIFEDVPSITLPRQDLEGDGMSLIDALVRCGIATSKSDARRAIEGGGIYINNVQSADVGRRLTLHDSIDGQCIVLRKGRRHYHLIRLV.

Residue tyrosine 33 participates in L-tyrosine binding. Residues 38-47 (PSADSLHIGH) carry the 'HIGH' region motif. The L-tyrosine site is built by tyrosine 170 and glutamine 174. The 'KMSKS' region signature appears at 230 to 234 (KFGKT). Lysine 233 serves as a coordination point for ATP. The 68-residue stretch at 357–424 (MSLIDALVRC…RRHYHLIRLV (68 aa)) folds into the S4 RNA-binding domain.

Belongs to the class-I aminoacyl-tRNA synthetase family. TyrS type 1 subfamily. Homodimer.

Its subcellular location is the cytoplasm. The catalysed reaction is tRNA(Tyr) + L-tyrosine + ATP = L-tyrosyl-tRNA(Tyr) + AMP + diphosphate + H(+). In terms of biological role, catalyzes the attachment of tyrosine to tRNA(Tyr) in a two-step reaction: tyrosine is first activated by ATP to form Tyr-AMP and then transferred to the acceptor end of tRNA(Tyr). The sequence is that of Tyrosine--tRNA ligase from Roseiflexus castenholzii (strain DSM 13941 / HLO8).